The following is a 291-amino-acid chain: ATP synthase gamma chain (291 aa).

The protein belongs to the ATPase gamma chain family. In terms of assembly, F-type ATPases have 2 components, CF(1) - the catalytic core - and CF(0) - the membrane proton channel. CF(1) has five subunits: alpha(3), beta(3), gamma(1), delta(1), epsilon(1). CF(0) has three main subunits: a, b and c.

Its subcellular location is the cell inner membrane. In terms of biological role, produces ATP from ADP in the presence of a proton gradient across the membrane. The gamma chain is believed to be important in regulating ATPase activity and the flow of protons through the CF(0) complex. This is ATP synthase gamma chain from Ruegeria sp. (strain TM1040) (Silicibacter sp.).